The chain runs to 448 residues: Tryptophan dimethylallyltransferase 1 (448 aa).

L-tryptophan is bound by residues 80-81 (IL) and E89. Substrate contacts are provided by R100, K186, and Y188. The L-tryptophan site is built by Y190 and R251. R264, K266, Y268, Q350, Y352, Y416, and Y420 together coordinate substrate.

The protein belongs to the tryptophan dimethylallyltransferase family. In terms of assembly, homodimer.

It catalyses the reaction L-tryptophan + dimethylallyl diphosphate = 4-(3-methylbut-2-enyl)-L-tryptophan + diphosphate. The protein operates within alkaloid biosynthesis; ergot alkaloid biosynthesis. Functionally, catalyzes the first step of ergot alkaloid biosynthesis. Ergot alkaloids, which are produced by endophyte fungi, can enhance plant host fitness, but also cause livestock toxicosis to host plants. The protein is Tryptophan dimethylallyltransferase 1 (dmaW1) of Epichloe coenophiala (Tall fescue endophyte fungus).